We begin with the raw amino-acid sequence, 982 residues long: Bifunctional glutamine synthetase adenylyltransferase/adenylyl-removing enzyme (982 aa).

The interval 1 to 460 is adenylyl removase; the sequence is MSLPSLANLP…HFRQVIADPD (460 aa). Residues 473–982 form an adenylyl transferase region; the sequence is GAEWIPLWEE…IRIWRELRLG (510 aa).

The protein belongs to the GlnE family. Mg(2+) is required as a cofactor.

It catalyses the reaction [glutamine synthetase]-O(4)-(5'-adenylyl)-L-tyrosine + phosphate = [glutamine synthetase]-L-tyrosine + ADP. The enzyme catalyses [glutamine synthetase]-L-tyrosine + ATP = [glutamine synthetase]-O(4)-(5'-adenylyl)-L-tyrosine + diphosphate. Its function is as follows. Involved in the regulation of glutamine synthetase GlnA, a key enzyme in the process to assimilate ammonia. When cellular nitrogen levels are high, the C-terminal adenylyl transferase (AT) inactivates GlnA by covalent transfer of an adenylyl group from ATP to specific tyrosine residue of GlnA, thus reducing its activity. Conversely, when nitrogen levels are low, the N-terminal adenylyl removase (AR) activates GlnA by removing the adenylyl group by phosphorolysis, increasing its activity. The regulatory region of GlnE binds the signal transduction protein PII (GlnB) which indicates the nitrogen status of the cell. In Pseudomonas aeruginosa (strain ATCC 15692 / DSM 22644 / CIP 104116 / JCM 14847 / LMG 12228 / 1C / PRS 101 / PAO1), this protein is Bifunctional glutamine synthetase adenylyltransferase/adenylyl-removing enzyme.